Consider the following 876-residue polypeptide: Alanine--tRNA ligase (876 aa).

Zn(2+) contacts are provided by histidine 565, histidine 569, cysteine 667, and histidine 671.

It belongs to the class-II aminoacyl-tRNA synthetase family. Zn(2+) serves as cofactor.

It is found in the cytoplasm. The enzyme catalyses tRNA(Ala) + L-alanine + ATP = L-alanyl-tRNA(Ala) + AMP + diphosphate. Its function is as follows. Catalyzes the attachment of alanine to tRNA(Ala) in a two-step reaction: alanine is first activated by ATP to form Ala-AMP and then transferred to the acceptor end of tRNA(Ala). Also edits incorrectly charged Ser-tRNA(Ala) and Gly-tRNA(Ala) via its editing domain. The protein is Alanine--tRNA ligase of Desulfosudis oleivorans (strain DSM 6200 / JCM 39069 / Hxd3) (Desulfococcus oleovorans).